Consider the following 113-residue polypeptide: Nucleoid-associated protein Csac_1593 (113 aa).

The protein belongs to the YbaB/EbfC family. In terms of assembly, homodimer.

The protein resides in the cytoplasm. It is found in the nucleoid. In terms of biological role, binds to DNA and alters its conformation. May be involved in regulation of gene expression, nucleoid organization and DNA protection. In Caldicellulosiruptor saccharolyticus (strain ATCC 43494 / DSM 8903 / Tp8T 6331), this protein is Nucleoid-associated protein Csac_1593.